Here is an 84-residue protein sequence, read N- to C-terminus: Defensin-like protein 37 (84 aa).

The first 24 residues, 1 to 24 (MAVKLIYLFLFLYIALLISGRTMS), serve as a signal peptide directing secretion. Disulfide bonds link cysteine 46–cysteine 67, cysteine 52–cysteine 79, and cysteine 56–cysteine 81.

It belongs to the DEFL family.

It is found in the secreted. This is Defensin-like protein 37 (EDA21) from Arabidopsis thaliana (Mouse-ear cress).